Here is a 269-residue protein sequence, read N- to C-terminus: Formamidopyrimidine-DNA glycosylase (269 aa).

P2 (schiff-base intermediate with DNA) is an active-site residue. The active-site Proton donor is the E3. K57 (proton donor; for beta-elimination activity) is an active-site residue. Residues H90, R109, and R150 each coordinate DNA. The FPG-type zinc finger occupies 235 to 269 (NVYGRAGQPCVQCDAILKADRHGQRSTAYCPQCQR). Residue R259 is the Proton donor; for delta-elimination activity of the active site.

This sequence belongs to the FPG family. As to quaternary structure, monomer. The cofactor is Zn(2+).

The enzyme catalyses Hydrolysis of DNA containing ring-opened 7-methylguanine residues, releasing 2,6-diamino-4-hydroxy-5-(N-methyl)formamidopyrimidine.. The catalysed reaction is 2'-deoxyribonucleotide-(2'-deoxyribose 5'-phosphate)-2'-deoxyribonucleotide-DNA = a 3'-end 2'-deoxyribonucleotide-(2,3-dehydro-2,3-deoxyribose 5'-phosphate)-DNA + a 5'-end 5'-phospho-2'-deoxyribonucleoside-DNA + H(+). Involved in base excision repair of DNA damaged by oxidation or by mutagenic agents. Acts as a DNA glycosylase that recognizes and removes damaged bases. Has a preference for oxidized purines, such as 7,8-dihydro-8-oxoguanine (8-oxoG). Has AP (apurinic/apyrimidinic) lyase activity and introduces nicks in the DNA strand. Cleaves the DNA backbone by beta-delta elimination to generate a single-strand break at the site of the removed base with both 3'- and 5'-phosphates. This Alcanivorax borkumensis (strain ATCC 700651 / DSM 11573 / NCIMB 13689 / SK2) protein is Formamidopyrimidine-DNA glycosylase.